A 245-amino-acid polypeptide reads, in one-letter code: Large ribosomal subunit protein uL2 (245 aa).

The tract at residues 196 to 226 (SPYAHPHGGGSHQKGGTPVSKTAPPGQKVGF) is disordered.

Belongs to the universal ribosomal protein uL2 family. In terms of assembly, part of the 50S ribosomal subunit. Forms a bridge to the 30S subunit in the 70S ribosome.

Its function is as follows. One of the primary rRNA binding proteins. Required for association of the 30S and 50S subunits to form the 70S ribosome, for tRNA binding and peptide bond formation. It has been suggested to have peptidyltransferase activity; this is somewhat controversial. Makes several contacts with the 16S rRNA in the 70S ribosome. This Pyrobaculum neutrophilum (strain DSM 2338 / JCM 9278 / NBRC 100436 / V24Sta) (Thermoproteus neutrophilus) protein is Large ribosomal subunit protein uL2.